Reading from the N-terminus, the 248-residue chain is Pyridoxine 5'-phosphate synthase (248 aa).

N12 is a binding site for 3-amino-2-oxopropyl phosphate. Residue 14-15 (DH) participates in 1-deoxy-D-xylulose 5-phosphate binding. R23 serves as a coordination point for 3-amino-2-oxopropyl phosphate. H48 serves as the catalytic Proton acceptor. Residues R50 and H55 each contribute to the 1-deoxy-D-xylulose 5-phosphate site. Residue E75 is the Proton acceptor of the active site. T105 serves as a coordination point for 1-deoxy-D-xylulose 5-phosphate. Residue H196 is the Proton donor of the active site. Residues G197 and 218 to 219 (GH) each bind 3-amino-2-oxopropyl phosphate.

It belongs to the PNP synthase family. In terms of assembly, homooctamer; tetramer of dimers.

It localises to the cytoplasm. The enzyme catalyses 3-amino-2-oxopropyl phosphate + 1-deoxy-D-xylulose 5-phosphate = pyridoxine 5'-phosphate + phosphate + 2 H2O + H(+). Its pathway is cofactor biosynthesis; pyridoxine 5'-phosphate biosynthesis; pyridoxine 5'-phosphate from D-erythrose 4-phosphate: step 5/5. In terms of biological role, catalyzes the complicated ring closure reaction between the two acyclic compounds 1-deoxy-D-xylulose-5-phosphate (DXP) and 3-amino-2-oxopropyl phosphate (1-amino-acetone-3-phosphate or AAP) to form pyridoxine 5'-phosphate (PNP) and inorganic phosphate. This Pseudomonas fluorescens (strain ATCC BAA-477 / NRRL B-23932 / Pf-5) protein is Pyridoxine 5'-phosphate synthase.